The primary structure comprises 191 residues: Lipid A acyltransferase PagP (191 aa).

An N-terminal signal peptide occupies residues 1-26 (MLKVNKYVILIIAFVSQMMFSTTAQA). Catalysis depends on residues His-63, Asp-106, and Ser-107.

Belongs to the lipid A palmitoyltransferase family. As to quaternary structure, homodimer.

It localises to the cell outer membrane. The enzyme catalyses a lipid A + a 1,2-diacyl-sn-glycero-3-phosphocholine = a hepta-acyl lipid A + a 2-acyl-sn-glycero-3-phosphocholine. It catalyses the reaction a lipid IVA + a 1,2-diacyl-sn-glycero-3-phosphocholine = a lipid IVB + a 2-acyl-sn-glycero-3-phosphocholine. The catalysed reaction is a lipid IIA + a 1,2-diacyl-sn-glycero-3-phosphocholine = a lipid IIB + a 2-acyl-sn-glycero-3-phosphocholine. In terms of biological role, transfers a fatty acid residue from the sn-1 position of a phospholipid to the N-linked hydroxyfatty acid chain on the proximal unit of lipid A or its precursors. The sequence is that of Lipid A acyltransferase PagP from Enterobacter lignolyticus (strain SCF1).